A 432-amino-acid chain; its full sequence is Enolase (432 aa).

Gln-167 is a (2R)-2-phosphoglycerate binding site. The active-site Proton donor is Glu-209. 3 residues coordinate Mg(2+): Asp-246, Glu-287, and Asp-314. Residues Lys-339, Arg-368, Ser-369, and Lys-390 each contribute to the (2R)-2-phosphoglycerate site. Lys-339 (proton acceptor) is an active-site residue.

This sequence belongs to the enolase family. Mg(2+) serves as cofactor.

The protein resides in the cytoplasm. The protein localises to the secreted. Its subcellular location is the cell surface. It carries out the reaction (2R)-2-phosphoglycerate = phosphoenolpyruvate + H2O. It participates in carbohydrate degradation; glycolysis; pyruvate from D-glyceraldehyde 3-phosphate: step 4/5. Catalyzes the reversible conversion of 2-phosphoglycerate (2-PG) into phosphoenolpyruvate (PEP). It is essential for the degradation of carbohydrates via glycolysis. This Prochlorococcus marinus (strain SARG / CCMP1375 / SS120) protein is Enolase.